A 144-amino-acid chain; its full sequence is Large ribosomal subunit protein uL16 (144 aa).

This sequence belongs to the universal ribosomal protein uL16 family. As to quaternary structure, part of the 50S ribosomal subunit.

Its function is as follows. Binds 23S rRNA and is also seen to make contacts with the A and possibly P site tRNAs. This is Large ribosomal subunit protein uL16 from Bacillus pumilus (strain SAFR-032).